The chain runs to 330 residues: DNA-directed RNA polymerase subunit alpha (330 aa).

Residues 1-236 (MQNSVIEFLK…EQLEAFIDLR (236 aa)) are alpha N-terminal domain (alpha-NTD). An alpha C-terminal domain (alpha-CTD) region spans residues 250 to 330 (FDPILLRLVD…NWPPTNILDN (81 aa)).

Belongs to the RNA polymerase alpha chain family. In terms of assembly, homodimer. The RNAP catalytic core consists of 2 alpha, 1 beta, 1 beta' and 1 omega subunit. When a sigma factor is associated with the core the holoenzyme is formed, which can initiate transcription.

The catalysed reaction is RNA(n) + a ribonucleoside 5'-triphosphate = RNA(n+1) + diphosphate. DNA-dependent RNA polymerase catalyzes the transcription of DNA into RNA using the four ribonucleoside triphosphates as substrates. This is DNA-directed RNA polymerase subunit alpha from Blochmanniella pennsylvanica (strain BPEN).